A 257-amino-acid polypeptide reads, in one-letter code: Ig delta chain C region secreted form (257 aa).

In terms of domain architecture, Ig-like 1 spans 5 to 105 (PDMFLLSECK…WDSQSSKRVT (101 aa)). Cysteine 26 and cysteine 78 form a disulfide bridge. N-linked (GlcNAc...) asparagine glycosylation is found at asparagine 58 and asparagine 75. Residues 89-111 (PFKFPESWDSQSSKRVTPTLQAK) form a disordered region. Polar residues predominate over residues 96–111 (WDSQSSKRVTPTLQAK). 3 N-linked (GlcNAc...) asparagine glycosylation sites follow: asparagine 112, asparagine 135, and asparagine 227. The Ig-like 2 domain occupies 133–233 (PSNLTVNILT…TKLNASKSLA (101 aa)).

In terms of tissue distribution, cell lines producing IgD contain several mRNA species for Ig delta chains. In plasmacytomas, the secreted form is the major component, and the membrane-bound form is a minor component. In spleen, however, the membrane-bound form is the major component. These two forms differ in their C-terminal segments.

The protein localises to the secreted. In Mus musculus (Mouse), this protein is Ig delta chain C region secreted form.